The following is a 123-amino-acid chain: uncharacterized protein (123 aa).

A signal peptide spans 1-20; that stretch reads MSPLIVGTLIIILLSGLATA. Gly96 carries GPI-anchor amidated glycine lipidation. The propeptide at 97-123 is removed in mature form; the sequence is SSPTTKRVIYIVMILLVLITLAVNLKH.

It localises to the cell membrane. This is an uncharacterized protein from Schizosaccharomyces pombe (strain 972 / ATCC 24843) (Fission yeast).